Consider the following 145-residue polypeptide: D-aminoacyl-tRNA deacylase (145 aa).

Residues 137–138 carry the Gly-cisPro motif, important for rejection of L-amino acids motif; that stretch reads GP.

This sequence belongs to the DTD family. Homodimer.

The protein localises to the cytoplasm. The enzyme catalyses glycyl-tRNA(Ala) + H2O = tRNA(Ala) + glycine + H(+). It carries out the reaction a D-aminoacyl-tRNA + H2O = a tRNA + a D-alpha-amino acid + H(+). Its function is as follows. An aminoacyl-tRNA editing enzyme that deacylates mischarged D-aminoacyl-tRNAs. Also deacylates mischarged glycyl-tRNA(Ala), protecting cells against glycine mischarging by AlaRS. Acts via tRNA-based rather than protein-based catalysis; rejects L-amino acids rather than detecting D-amino acids in the active site. By recycling D-aminoacyl-tRNA to D-amino acids and free tRNA molecules, this enzyme counteracts the toxicity associated with the formation of D-aminoacyl-tRNA entities in vivo and helps enforce protein L-homochirality. The polypeptide is D-aminoacyl-tRNA deacylase (Alcanivorax borkumensis (strain ATCC 700651 / DSM 11573 / NCIMB 13689 / SK2)).